The primary structure comprises 548 residues: Frizzled-7-B (548 aa).

An N-terminal signal peptide occupies residues 1 to 18 (MLAPVSLLFCLFLQLCPS). Topologically, residues 19–230 (AQQYHGEKGI…EEEVRFARLW (212 aa)) are extracellular. One can recognise an FZ domain in the interval 31–150 (PDHGFCQPIS…HGAGEICVGQ (120 aa)). Intrachain disulfides connect Cys36-Cys97, Cys44-Cys90, Cys81-Cys118, Cys107-Cys147, and Cys111-Cys135. N-linked (GlcNAc...) asparagine glycosylation occurs at Asn50. Asn151 is a glycosylation site (N-linked (GlcNAc...) asparagine). Residues 231-251 (VGIWAILCGISTLFTVLTYLV) form a helical membrane-spanning segment. Topologically, residues 252 to 262 (DMRRFSYPERP) are cytoplasmic. A helical transmembrane segment spans residues 263–283 (IIFLSGCYFMVAVAYTAGFLL). At 284–311 (EERAVCVERFSEDSYRTVAQGTKKEGCT) the chain is on the extracellular side. The helical transmembrane segment at 312–332 (ILFMILYFFGMASSIWWVILA) threads the bilayer. Residues 333–353 (LTWFLSAGMKWGHEAIEANSQ) lie on the Cytoplasmic side of the membrane. A helical transmembrane segment spans residues 354 to 374 (YFHLAAWAVPAVKTITILAMG). Residues 375–397 (QVDGDVLSGVCYVGINSVDSLRG) lie on the Extracellular side of the membrane. Residues 398–418 (FVLAPLFVYLFLGTSFLLAGF) traverse the membrane as a helical segment. Over 419–444 (VSLFRIRTIMKHDGTKTEKLEKLMVR) the chain is Cytoplasmic. A helical membrane pass occupies residues 445 to 465 (IGVFSVMYTVPATIVLACYFY). The Extracellular segment spans residues 466–502 (EQAFRDTWEKTWLVHTCKGYAVPCPNYNFAPMSPDFT). Residues 503-523 (VFMIKYLMTMIVGITSSFWIW) traverse the membrane as a helical segment. The Cytoplasmic segment spans residues 524-548 (SGKTLQSWRRFYHRLGNGSKGETAV). A Lys-Thr-X-X-X-Trp motif, mediates interaction with the PDZ domain of Dvl family members motif is present at residues 526-531 (KTLQSW). The short motif at 546 to 548 (TAV) is the PDZ-binding element.

It belongs to the G-protein coupled receptor Fz/Smo family. As to quaternary structure, interacts with wnt11 and sdc4. The extracellular domain interacts with the extracellular domain of pcdh8/papc. Interacts (via C-terminus) with dvl1 (via PDZ domain). In terms of tissue distribution, during gastrulation, broadly expressed on the dorsal side of the embryo in deep mesodermal cells surrounding the blastopore lip and in presumptive anterior neuroectoderm. During neurulation, localized to the cranial neural crest and heart field where expression is retained at later stages in addition to new areas of expression in the neural tube, pronephros and tailbud. At tailbud stage, expressed in the pronephric duct, and broad head expression becomes more restricted to the hindbrain. In tadpoles, strongly expressed in the eye and the pericardium and myocardium of the developing heart.

It is found in the cell membrane. It localises to the endosome membrane. Functionally, receptor for Wnt proteins. Acts in both canonical and non-canonical Wnt pathways. Although different papers report differing Wnt preferences, wnt5a, wnt8b and wnt11 have been proposed as synergists. In the canonical Wnt pathway, acts via beta-catenin to promote the expression of the dorsal genes siamois, twin and nodal3 and to establish the dorsal axis of the embryo and induce dorsal mesoderm formation. In a non-canonical Wnt/planar cell polarity (PCP) pathway, acts with sdc4 and dvl2/dsh to regulate convergent extension cell movements during gastrulation. Triggers phosphorylation of dvl2/dsh and its translocation to the plasma membrane. In a third branch of Wnt signaling, acts in a non-canonical pathway via trimeric G proteins, and independently of dvl2/dsh, to recruit protein kinase C (PKC) to the membrane and thus activate PKC. PKC signaling controls cell sorting and tissue separation during gastrulation. The polypeptide is Frizzled-7-B (fzd7-b) (Xenopus laevis (African clawed frog)).